The chain runs to 248 residues: Probable transcriptional regulatory protein Nwi_2729 (248 aa).

The tract at residues 1-21 (MAGHSQFKNIMHRKGRQDAQK) is disordered.

This sequence belongs to the TACO1 family.

Its subcellular location is the cytoplasm. This chain is Probable transcriptional regulatory protein Nwi_2729, found in Nitrobacter winogradskyi (strain ATCC 25391 / DSM 10237 / CIP 104748 / NCIMB 11846 / Nb-255).